The primary structure comprises 305 residues: HPr kinase/phosphorylase (305 aa).

Active-site residues include His-136 and Lys-157. Position 151 to 158 (151 to 158 (GESGIGKS)) interacts with ATP. Ser-158 is a binding site for Mg(2+). Asp-175 functions as the Proton acceptor; for phosphorylation activity. Proton donor; for dephosphorylation activity in the catalytic mechanism. The important for the catalytic mechanism of both phosphorylation and dephosphorylation stretch occupies residues 198 to 207 (LEVRGLGIID). Residue Glu-199 coordinates Mg(2+). The active site involves Arg-240. The tract at residues 261–266 (PIRPGR) is important for the catalytic mechanism of dephosphorylation.

The protein belongs to the HPrK/P family. In terms of assembly, homohexamer. Requires Mg(2+) as cofactor.

The enzyme catalyses [HPr protein]-L-serine + ATP = [HPr protein]-O-phospho-L-serine + ADP + H(+). It carries out the reaction [HPr protein]-O-phospho-L-serine + phosphate + H(+) = [HPr protein]-L-serine + diphosphate. In terms of biological role, catalyzes the ATP- as well as the pyrophosphate-dependent phosphorylation of a specific serine residue in HPr, a phosphocarrier protein of the phosphoenolpyruvate-dependent sugar phosphotransferase system (PTS). HprK/P also catalyzes the pyrophosphate-producing, inorganic phosphate-dependent dephosphorylation (phosphorolysis) of seryl-phosphorylated HPr (P-Ser-HPr). The two antagonistic activities of HprK/P are regulated by several intracellular metabolites, which change their concentration in response to the absence or presence of rapidly metabolisable carbon sources (glucose, fructose, etc.) in the growth medium. Therefore, by controlling the phosphorylation state of HPr, HPrK/P is a sensor enzyme that plays a major role in the regulation of carbon metabolism and sugar transport: it mediates carbon catabolite repression (CCR), and regulates PTS-catalyzed carbohydrate uptake and inducer exclusion. The chain is HPr kinase/phosphorylase from Clostridium tetani (strain Massachusetts / E88).